A 525-amino-acid polypeptide reads, in one-letter code: ATP synthase subunit alpha (525 aa).

171-178 (GDRQTGKS) contributes to the ATP binding site.

Belongs to the ATPase alpha/beta chains family. F-type ATPases have 2 components, CF(1) - the catalytic core - and CF(0) - the membrane proton channel. CF(1) has five subunits: alpha(3), beta(3), gamma(1), delta(1), epsilon(1). CF(0) has three main subunits: a(1), b(2) and c(9-12). The alpha and beta chains form an alternating ring which encloses part of the gamma chain. CF(1) is attached to CF(0) by a central stalk formed by the gamma and epsilon chains, while a peripheral stalk is formed by the delta and b chains.

It is found in the cell inner membrane. The enzyme catalyses ATP + H2O + 4 H(+)(in) = ADP + phosphate + 5 H(+)(out). In terms of biological role, produces ATP from ADP in the presence of a proton gradient across the membrane. The alpha chain is a regulatory subunit. The sequence is that of ATP synthase subunit alpha from Flavobacterium johnsoniae (strain ATCC 17061 / DSM 2064 / JCM 8514 / BCRC 14874 / CCUG 350202 / NBRC 14942 / NCIMB 11054 / UW101) (Cytophaga johnsonae).